The following is a 377-amino-acid chain: Chaperone protein DnaJ (377 aa).

Residues 5 to 70 (DYYEVLEVSR…EKRTIYDRYG (66 aa)) enclose the J domain. The CR-type zinc-finger motif lies at 138–215 (GCEKKIDITY…CQGKGYHEET (78 aa)). Residues Cys151, Cys154, Cys167, Cys170, Cys189, Cys192, Cys203, and Cys206 each contribute to the Zn(2+) site. CXXCXGXG motif repeat units follow at residues 151-158 (CEECGGTG), 167-174 (CDYCGGQG), 189-196 (CPKCHGEG), and 203-210 (CPSCQGKG).

It belongs to the DnaJ family. Homodimer. The cofactor is Zn(2+).

Its subcellular location is the cytoplasm. In terms of biological role, participates actively in the response to hyperosmotic and heat shock by preventing the aggregation of stress-denatured proteins and by disaggregating proteins, also in an autonomous, DnaK-independent fashion. Unfolded proteins bind initially to DnaJ; upon interaction with the DnaJ-bound protein, DnaK hydrolyzes its bound ATP, resulting in the formation of a stable complex. GrpE releases ADP from DnaK; ATP binding to DnaK triggers the release of the substrate protein, thus completing the reaction cycle. Several rounds of ATP-dependent interactions between DnaJ, DnaK and GrpE are required for fully efficient folding. Also involved, together with DnaK and GrpE, in the DNA replication of plasmids through activation of initiation proteins. This is Chaperone protein DnaJ from Sulfurovum sp. (strain NBC37-1).